Consider the following 307-residue polypeptide: Aspartate carbamoyltransferase catalytic subunit (307 aa).

Residues Arg-56 and Thr-57 each coordinate carbamoyl phosphate. An L-aspartate-binding site is contributed by Lys-84. Positions 106, 136, and 139 each coordinate carbamoyl phosphate. 2 residues coordinate L-aspartate: Arg-169 and Arg-221. 2 residues coordinate carbamoyl phosphate: Ala-262 and Pro-263.

Belongs to the aspartate/ornithine carbamoyltransferase superfamily. ATCase family. Heterododecamer (2C3:3R2) of six catalytic PyrB chains organized as two trimers (C3), and six regulatory PyrI chains organized as three dimers (R2).

It carries out the reaction carbamoyl phosphate + L-aspartate = N-carbamoyl-L-aspartate + phosphate + H(+). It functions in the pathway pyrimidine metabolism; UMP biosynthesis via de novo pathway; (S)-dihydroorotate from bicarbonate: step 2/3. Catalyzes the condensation of carbamoyl phosphate and aspartate to form carbamoyl aspartate and inorganic phosphate, the committed step in the de novo pyrimidine nucleotide biosynthesis pathway. This Streptococcus pneumoniae (strain JJA) protein is Aspartate carbamoyltransferase catalytic subunit.